Consider the following 71-residue polypeptide: Beta-defensin 25 (71 aa).

Residues 1–22 (MAKWILLIVALLVLSHVPPGST) form the signal peptide. 3 disulfide bridges follow: Cys-27–Cys-54, Cys-34–Cys-48, and Cys-38–Cys-55.

Belongs to the beta-defensin family.

Its subcellular location is the secreted. Functionally, has antibacterial activity. This Mus musculus (Mouse) protein is Beta-defensin 25 (Defb25).